Here is a 150-residue protein sequence, read N- to C-terminus: uncharacterized protein (150 aa).

A run of 3 helical transmembrane segments spans residues 50 to 70 (VVSV…VIHL), 80 to 100 (LYIT…QLWL), and 127 to 147 (KVVI…FFIE).

The protein localises to the membrane. This is an uncharacterized protein from Schizosaccharomyces pombe (strain 972 / ATCC 24843) (Fission yeast).